The primary structure comprises 284 residues: Phosphonates import ATP-binding protein PhnC 1 (284 aa).

Positions I5–A253 constitute an ABC transporter domain. Residue G38–S45 coordinates ATP.

It belongs to the ABC transporter superfamily. Phosphonates importer (TC 3.A.1.9.1) family. The complex is composed of two ATP-binding proteins (PhnC), two transmembrane proteins (PhnE) and a solute-binding protein (PhnD).

Its subcellular location is the cell inner membrane. It carries out the reaction phosphonate(out) + ATP + H2O = phosphonate(in) + ADP + phosphate + H(+). Part of the ABC transporter complex PhnCDE involved in phosphonates import. Responsible for energy coupling to the transport system. This is Phosphonates import ATP-binding protein PhnC 1 from Cupriavidus metallidurans (strain ATCC 43123 / DSM 2839 / NBRC 102507 / CH34) (Ralstonia metallidurans).